The sequence spans 181 residues: ATP synthase subunit b (181 aa).

A helical membrane pass occupies residues 16–36 (LIPPIPELVIGLIAFVIVFGF).

This sequence belongs to the ATPase B chain family. In terms of assembly, F-type ATPases have 2 components, F(1) - the catalytic core - and F(0) - the membrane proton channel. F(1) has five subunits: alpha(3), beta(3), gamma(1), delta(1), epsilon(1). F(0) has three main subunits: a(1), b(2) and c(10-14). The alpha and beta chains form an alternating ring which encloses part of the gamma chain. F(1) is attached to F(0) by a central stalk formed by the gamma and epsilon chains, while a peripheral stalk is formed by the delta and b chains.

Its subcellular location is the cell membrane. F(1)F(0) ATP synthase produces ATP from ADP in the presence of a proton or sodium gradient. F-type ATPases consist of two structural domains, F(1) containing the extramembraneous catalytic core and F(0) containing the membrane proton channel, linked together by a central stalk and a peripheral stalk. During catalysis, ATP synthesis in the catalytic domain of F(1) is coupled via a rotary mechanism of the central stalk subunits to proton translocation. In terms of biological role, component of the F(0) channel, it forms part of the peripheral stalk, linking F(1) to F(0). This chain is ATP synthase subunit b, found in Streptomyces lividans.